Reading from the N-terminus, the 598-residue chain is Protein VASCULAR ASSOCIATED DEATH 1, chloroplastic (598 aa).

Residues 1–11 (MAMLSTASVSG) show a composition bias toward polar residues. The interval 1–64 (MAMLSTASVS…PSRGGDNQSE (64 aa)) is disordered. The N-terminal 68 residues, 1 to 68 (MAMLSTASVS…GDNQSEVISK (68 aa)), are a transit peptide targeting the chloroplast. A glycan (N-linked (GlcNAc...) asparagine) is linked at N61. A GRAM domain is found at 70–134 (EEYRQLFRLP…PFAEISCVKR (65 aa)). Positions 272 to 444 (DFTKVAEAKF…MAHELLKQKK (173 aa)) constitute a VASt domain. 2 N-linked (GlcNAc...) asparagine glycosylation sites follow: N329 and N494. Residues 507-527 (QVIVLAFAVILLMQVTIVVLL) form a helical membrane-spanning segment. Residues 553–595 (WLEKRMHFLREEMMMVEDRLQRMRQDHAALKAQFHHLERLLRR) adopt a coiled-coil conformation.

It localises to the membrane. It is found in the plastid. Its subcellular location is the chloroplast. Its function is as follows. Involved in ethylene- and salicylic acid-dependent cell death control associated with cells in the vicinity of vascular bundles. The chain is Protein VASCULAR ASSOCIATED DEATH 1, chloroplastic from Arabidopsis thaliana (Mouse-ear cress).